The primary structure comprises 185 residues: Ribosome maturation factor RimM (185 aa).

Residues 96-171 (EDEFYHSDLL…VITIDPPEDV (76 aa)) enclose the PRC barrel domain. A disordered region spans residues 165-185 (IDPPEDVGSKAEEEGGGAPDD).

Belongs to the RimM family. Binds ribosomal protein uS19.

It localises to the cytoplasm. In terms of biological role, an accessory protein needed during the final step in the assembly of 30S ribosomal subunit, possibly for assembly of the head region. Essential for efficient processing of 16S rRNA. May be needed both before and after RbfA during the maturation of 16S rRNA. It has affinity for free ribosomal 30S subunits but not for 70S ribosomes. In Maricaulis maris (strain MCS10) (Caulobacter maris), this protein is Ribosome maturation factor RimM.